A 426-amino-acid chain; its full sequence is Trigger factor (426 aa).

In terms of domain architecture, PPIase FKBP-type spans G160–P240.

Belongs to the FKBP-type PPIase family. Tig subfamily.

The protein localises to the cytoplasm. The enzyme catalyses [protein]-peptidylproline (omega=180) = [protein]-peptidylproline (omega=0). Its function is as follows. Involved in protein export. Acts as a chaperone by maintaining the newly synthesized protein in an open conformation. Functions as a peptidyl-prolyl cis-trans isomerase. The polypeptide is Trigger factor (Chlorobaculum tepidum (strain ATCC 49652 / DSM 12025 / NBRC 103806 / TLS) (Chlorobium tepidum)).